A 162-amino-acid polypeptide reads, in one-letter code: 2-C-methyl-D-erythritol 2,4-cyclodiphosphate synthase (162 aa).

The a divalent metal cation site is built by aspartate 10 and histidine 12. Residues 10 to 12 and 36 to 37 contribute to the 4-CDP-2-C-methyl-D-erythritol 2-phosphate site; these read DVH and HS. Histidine 44 is a binding site for a divalent metal cation. 4-CDP-2-C-methyl-D-erythritol 2-phosphate-binding positions include 58–60, 63–67, and arginine 144; these read DIG and FPDTD.

It belongs to the IspF family. As to quaternary structure, homotrimer. The cofactor is a divalent metal cation.

It catalyses the reaction 4-CDP-2-C-methyl-D-erythritol 2-phosphate = 2-C-methyl-D-erythritol 2,4-cyclic diphosphate + CMP. It participates in isoprenoid biosynthesis; isopentenyl diphosphate biosynthesis via DXP pathway; isopentenyl diphosphate from 1-deoxy-D-xylulose 5-phosphate: step 4/6. Involved in the biosynthesis of isopentenyl diphosphate (IPP) and dimethylallyl diphosphate (DMAPP), two major building blocks of isoprenoid compounds. Catalyzes the conversion of 4-diphosphocytidyl-2-C-methyl-D-erythritol 2-phosphate (CDP-ME2P) to 2-C-methyl-D-erythritol 2,4-cyclodiphosphate (ME-CPP) with a corresponding release of cytidine 5-monophosphate (CMP). This is 2-C-methyl-D-erythritol 2,4-cyclodiphosphate synthase from Laribacter hongkongensis (strain HLHK9).